Consider the following 85-residue polypeptide: MFLSLLAITPASVSWTPKVALVMIICNVIAIAIGKATIKYPNEGAKMPSASFFGGMSHGAMLGCTSFGHLLGMGAILGLSTRGVF.

A run of 2 helical transmembrane segments spans residues 13–33 (VSWT…AIAI) and 59–79 (GAML…ILGL).

Belongs to the PsaG/PsaK family.

The protein resides in the cellular thylakoid membrane. The sequence is that of Photosystem I reaction center subunit PsaK from Synechococcus sp. (strain WH7803).